The following is a 59-amino-acid chain: Large ribosomal subunit protein uL30 (59 aa).

The protein belongs to the universal ribosomal protein uL30 family. Part of the 50S ribosomal subunit.

The sequence is that of Large ribosomal subunit protein uL30 from Geotalea uraniireducens (strain Rf4) (Geobacter uraniireducens).